The sequence spans 388 residues: Putative nickel insertion protein (388 aa).

This sequence belongs to the LarC family.

This chain is Putative nickel insertion protein, found in Syntrophobacter fumaroxidans (strain DSM 10017 / MPOB).